The primary structure comprises 980 residues: GPI inositol-deacylase (980 aa).

The Cytoplasmic portion of the chain corresponds to 1-7 (MFMFRNC). Residues 8–28 (AVLLVIGSICCFIYGLFRLHV) form a helical membrane-spanning segment. At 29-628 (EVEPNACRMT…EYSYSSALSR (600 aa)) the chain is on the lumenal side. Ser-170 is an active-site residue. Asn-427, Asn-517, and Asn-596 each carry an N-linked (GlcNAc...) asparagine glycan. A helical membrane pass occupies residues 629–649 (LVLEFYGWLPAHLVCVLLIVL). Over 650-709 (RKQVETFYDVGTFRSLRPYVGYLQYTSLYIVTACRLLKKLIISSRVFPEPEPLDYSINVS) the chain is Cytoplasmic. The chain crosses the membrane as a helical span at residues 710 to 730 (IVIHCAAIALSLLATLGTWLA). Residues 731–774 (LTLYGNAFYRLALRITRLSQATSNVMISIMTHLPITYGILTIAT) lie on the Lumenal side of the membrane. Residues 775–795 (AMGTCSGVGLLLAFVFYFLML) form a helical membrane-spanning segment. Topologically, residues 796–867 (SNAYKDYLED…CVGLQNFSFH (72 aa)) are cytoplasmic. The disordered stretch occupies residues 821–853 (AVTEQEDATEEQNEEQNALKQNDEQKQQQQEEE). A compositionally biased stretch (acidic residues) spans 824–834 (EQEDATEEQNE). A helical transmembrane segment spans residues 868–888 (VTLLLMLFVQLLLNAPSSLAW). Topologically, residues 889–895 (LRSRRHG) are lumenal. A helical membrane pass occupies residues 896 to 916 (INLPDPSLYPSIVVLASLSLL). The Cytoplasmic segment spans residues 917–929 (LQLRAPQKCQGYW). Residues 930 to 950 (MLSIAFYILAGVVLLYCQAAI) form a helical membrane-spanning segment. At 951 to 954 (YRLT) the chain is on the lumenal side. The helical transmembrane segment at 955–975 (YVIAGAFALLSAHQSLWILWG) threads the bilayer. Over 976–980 (RVSRV) the chain is Cytoplasmic.

It belongs to the GPI inositol-deacylase family.

It localises to the endoplasmic reticulum membrane. In terms of biological role, involved in inositol deacylation of GPI-anchored proteins. The sequence is that of GPI inositol-deacylase from Drosophila melanogaster (Fruit fly).